We begin with the raw amino-acid sequence, 419 residues long: Tyrosine--tRNA ligase (419 aa).

Residue Y34 coordinates L-tyrosine. The 'HIGH' region motif lies at 39–48 (PTADSLHIGN). 2 residues coordinate L-tyrosine: Y169 and Q173. The 'KMSKS' region motif lies at 230–234 (KFGKT). K233 lines the ATP pocket. Residues 352-419 (VPLVELLVSA…KKKYYLIRYA (68 aa)) enclose the S4 RNA-binding domain.

Belongs to the class-I aminoacyl-tRNA synthetase family. TyrS type 1 subfamily. In terms of assembly, homodimer.

It is found in the cytoplasm. It carries out the reaction tRNA(Tyr) + L-tyrosine + ATP = L-tyrosyl-tRNA(Tyr) + AMP + diphosphate + H(+). In terms of biological role, catalyzes the attachment of tyrosine to tRNA(Tyr) in a two-step reaction: tyrosine is first activated by ATP to form Tyr-AMP and then transferred to the acceptor end of tRNA(Tyr). This chain is Tyrosine--tRNA ligase, found in Geobacillus kaustophilus (strain HTA426).